A 618-amino-acid polypeptide reads, in one-letter code: Beta-glucosidase C (618 aa).

Positions methionine 1–glycine 19 are cleaved as a signal peptide. N-linked (GlcNAc...) asparagine glycans are attached at residues asparagine 40, asparagine 82, asparagine 104, asparagine 211, and asparagine 263. Aspartate 330 is an active-site residue. Residues asparagine 417, asparagine 448, asparagine 477, asparagine 482, asparagine 502, and asparagine 517 are each glycosylated (N-linked (GlcNAc...) asparagine).

The protein belongs to the glycosyl hydrolase 3 family.

It localises to the secreted. The enzyme catalyses Hydrolysis of terminal, non-reducing beta-D-glucosyl residues with release of beta-D-glucose.. It participates in glycan metabolism; cellulose degradation. Its function is as follows. Beta-glucosidases are one of a number of cellulolytic enzymes involved in the degradation of cellulosic biomass. Catalyzes the last step releasing glucose from the inhibitory cellobiose. The protein is Beta-glucosidase C (bglC) of Emericella nidulans (strain FGSC A4 / ATCC 38163 / CBS 112.46 / NRRL 194 / M139) (Aspergillus nidulans).